A 295-amino-acid polypeptide reads, in one-letter code: Ribosomal RNA small subunit methyltransferase H (295 aa).

Residues 32-34 (GGY), D50, F77, D98, and Q105 each bind S-adenosyl-L-methionine. Residues 275 to 295 (KEISENTRSRSAKLRGIVKEE) form a disordered region.

This sequence belongs to the methyltransferase superfamily. RsmH family.

It is found in the cytoplasm. It carries out the reaction cytidine(1402) in 16S rRNA + S-adenosyl-L-methionine = N(4)-methylcytidine(1402) in 16S rRNA + S-adenosyl-L-homocysteine + H(+). Specifically methylates the N4 position of cytidine in position 1402 (C1402) of 16S rRNA. In Anaplasma phagocytophilum (strain HZ), this protein is Ribosomal RNA small subunit methyltransferase H.